A 222-amino-acid polypeptide reads, in one-letter code: uncharacterized protein (222 aa).

This sequence belongs to the PhoU family.

Its subcellular location is the cytoplasm. In terms of biological role, not known; probably involved in phosphate transport and/or metabolism. This is an uncharacterized protein from Deinococcus radiodurans (strain ATCC 13939 / DSM 20539 / JCM 16871 / CCUG 27074 / LMG 4051 / NBRC 15346 / NCIMB 9279 / VKM B-1422 / R1).